A 309-amino-acid polypeptide reads, in one-letter code: Methionyl-tRNA formyltransferase (309 aa).

(6S)-5,6,7,8-tetrahydrofolate is bound at residue 109–112 (SLLP).

The protein belongs to the Fmt family.

The enzyme catalyses L-methionyl-tRNA(fMet) + (6R)-10-formyltetrahydrofolate = N-formyl-L-methionyl-tRNA(fMet) + (6S)-5,6,7,8-tetrahydrofolate + H(+). Attaches a formyl group to the free amino group of methionyl-tRNA(fMet). The formyl group appears to play a dual role in the initiator identity of N-formylmethionyl-tRNA by promoting its recognition by IF2 and preventing the misappropriation of this tRNA by the elongation apparatus. The sequence is that of Methionyl-tRNA formyltransferase from Clostridium perfringens (strain 13 / Type A).